A 698-amino-acid polypeptide reads, in one-letter code: Polyribonucleotide nucleotidyltransferase (698 aa).

Positions 490 and 496 each coordinate Mg(2+). Residues 557–616 (PKVVTMTIKPDKIRDVIGPGGKKINEIIDETGVKLDIEQDGTIFIGAVDQAMINRAREII) form the KH domain. Positions 626 to 694 (GQTYQATVKR…KQGRVNASHR (69 aa)) constitute an S1 motif domain.

It belongs to the polyribonucleotide nucleotidyltransferase family. Mg(2+) serves as cofactor.

It localises to the cytoplasm. It catalyses the reaction RNA(n+1) + phosphate = RNA(n) + a ribonucleoside 5'-diphosphate. Its function is as follows. Involved in mRNA degradation. Catalyzes the phosphorolysis of single-stranded polyribonucleotides processively in the 3'- to 5'-direction. The polypeptide is Polyribonucleotide nucleotidyltransferase (Staphylococcus aureus (strain MSSA476)).